The following is a 237-amino-acid chain: Large ribosomal subunit protein uL1 (237 aa).

This sequence belongs to the universal ribosomal protein uL1 family. In terms of assembly, part of the 50S ribosomal subunit.

Functionally, binds directly to 23S rRNA. The L1 stalk is quite mobile in the ribosome, and is involved in E site tRNA release. Protein L1 is also a translational repressor protein, it controls the translation of the L11 operon by binding to its mRNA. This is Large ribosomal subunit protein uL1 from Chloroflexus aurantiacus (strain ATCC 29364 / DSM 637 / Y-400-fl).